Consider the following 156-residue polypeptide: Endogenous retrovirus group K member 6 Pro protein (156 aa).

Residues 21 to 96 (FEGLVDTGAD…IPLNLWGRDL (76 aa)) enclose the Peptidase A2 domain. The active site involves aspartate 26. Residues 111 to 156 (YSPTSQKIMTKMGYIPGKGLGKNEDGIKIPVEAKINQEREGIGNPC) form the G-patch domain.

The protein belongs to the peptidase A2 family. HERV class-II K(HML-2) subfamily. Active as a homodimer. In terms of processing, autoproteolytically processed at the N-terminus. Expected C-terminal autoprocessing not detected. The sequence shown is that of the processed Pro protein.

It carries out the reaction Processing at the authentic HIV-1 PR recognition site and release of the mature p17 matrix and the p24 capsid protein, as a result of the cleavage of the -SQNY-|-PIVQ- cleavage site.. Its function is as follows. Retroviral proteases have roles in the processing of the primary translation products and the maturation of the viral particle. Endogenous Pro proteins may have kept, lost or modified their original function during evolution. This is Endogenous retrovirus group K member 6 Pro protein (ERVK-6) from Homo sapiens (Human).